The chain runs to 221 residues: Glutathione peroxidase 6 (221 aa).

The signal sequence occupies residues 1-19; sequence MTQQFWGPCLFSLFMAVLA. Residue Cys-73 is part of the active site.

Belongs to the glutathione peroxidase family. As to expression, expressed in the Bowman glands.

It is found in the secreted. The catalysed reaction is 2 glutathione + H2O2 = glutathione disulfide + 2 H2O. The chain is Glutathione peroxidase 6 (Gpx6) from Rattus norvegicus (Rat).